The sequence spans 221 residues: Vesicle-associated membrane protein 713 (221 aa).

Residue alanine 2 is modified to N-acetylalanine. Residues 2–190 are Cytoplasmic-facing; that stretch reads AIIFALVARG…RTIMWWRNVK (189 aa). The 106-residue stretch at 7-112 folds into the Longin domain; it reads LVARGTVVLS…SMNDEFSRVL (106 aa). The v-SNARE coiled-coil homology domain maps to 127–187; the sequence is RMSRIKGEMS…RRYRTIMWWR (61 aa). A helical; Anchor for type IV membrane protein transmembrane segment spans residues 191 to 211; the sequence is LTIALILVLALVVYIAMAFVC. At 212 to 221 the chain is on the vesicular side; it reads HGPSLPSCFK.

The protein belongs to the synaptobrevin family. As to quaternary structure, interacts with subunits of the vacuole protein sorting (HOPS) complex including VPS11, VCL1, VPS18, VPS33, VPS39 and VPS41. As to expression, highly expressed in stems and roots. Detected in flowers and leaves.

The protein localises to the vacuole membrane. Its subcellular location is the prevacuolar compartment membrane. In terms of biological role, involved in the targeting and/or fusion of transport vesicles to their target membrane. The protein is Vesicle-associated membrane protein 713 of Arabidopsis thaliana (Mouse-ear cress).